Here is a 323-residue protein sequence, read N- to C-terminus: MSEVLPLLYLHGLSSNDFTPALEQFLGSGAGLSASTITRLTAQWQDEARAFGARDLSATDYVYLWVDGIHLKVRLDQEKLCLLVMLGVRADGRKELVAITDGYRESAESWADLLRDCKRRGMTAPVLAIGDGALGFWKAVREVFPATKEQRCWFHKQANVLAALPKSAHPSALAAIKEIYNAEDIDKAQIAVKAFEADFGAKYPKAVAKITDDLDVLLEFYKYPAEHWIHLRTTNPIESTFATVRLRTKVTKGPGSRAAGLAMAYKLIDAAAARWRAVNAPHLVALVRAGAVFHKGRLLERPTDITPPTSPSDGGQHAGTEVA.

The segment at 300–323 is disordered; the sequence is ERPTDITPPTSPSDGGQHAGTEVA. The segment covering 304 to 313 has biased composition (low complexity); sequence DITPPTSPSD.

This sequence belongs to the transposase mutator family.

Functionally, required for the transposition of the insertion element. In Mycolicibacterium smegmatis (Mycobacterium smegmatis), this protein is Transposase for insertion sequence element IS6120.